The chain runs to 174 residues: RNA pyrophosphohydrolase (174 aa).

One can recognise a Nudix hydrolase domain in the interval 6-149 (GYRPNVGIIL…KRDVYLGALK (144 aa)). The short motif at 38–59 (GGIKPGESPETAMYRELYEEVG) is the Nudix box element.

The protein belongs to the Nudix hydrolase family. RppH subfamily. A divalent metal cation is required as a cofactor.

Functionally, accelerates the degradation of transcripts by removing pyrophosphate from the 5'-end of triphosphorylated RNA, leading to a more labile monophosphorylated state that can stimulate subsequent ribonuclease cleavage. In Neisseria meningitidis serogroup A / serotype 4A (strain DSM 15465 / Z2491), this protein is RNA pyrophosphohydrolase.